The primary structure comprises 1010 residues: Regulator of telomere elongation helicase 1 homolog (1010 aa).

Residues 7-333 (NGITVNFPFE…KEMLLQLEKT (327 aa)) enclose the Helicase ATP-binding domain. 42–49 (SPTGTGKT) lines the ATP pocket. Positions 157, 175, 184, and 220 each coordinate [4Fe-4S] cluster. The DEAH box motif lies at 263–266 (DEAH). Residues 912–931 (TSDDEDPGRTGDDPTRQAPE) form a disordered region. A compositionally biased stretch (basic and acidic residues) spans 918 to 931 (PGRTGDDPTRQAPE).

Belongs to the helicase family. RAD3/XPD subfamily.

The protein resides in the nucleus. The catalysed reaction is ATP + H2O = ADP + phosphate + H(+). In terms of biological role, a probable ATP-dependent DNA helicase implicated in DNA repair and the maintenance of genomic stability. Acts as an anti-recombinase to counteract toxic recombination and limit crossover during meiosis. Regulates meiotic recombination and crossover homeostasis by physically dissociating strand invasion events and thereby promotes noncrossover repair by meiotic synthesis dependent strand annealing (SDSA) as well as disassembly of D loop recombination intermediates. The polypeptide is Regulator of telomere elongation helicase 1 homolog (Aedes aegypti (Yellowfever mosquito)).